We begin with the raw amino-acid sequence, 596 residues long: NADH-quinone oxidoreductase subunit C/D (596 aa).

An NADH dehydrogenase I subunit C region spans residues 1–186 (MTDLTAQDAA…DPFELTKAKQ (186 aa)). Positions 210–596 (DFMFLNLGPN…IDFVMSDVDR (387 aa)) are NADH dehydrogenase I subunit D.

It in the N-terminal section; belongs to the complex I 30 kDa subunit family. The protein in the C-terminal section; belongs to the complex I 49 kDa subunit family. In terms of assembly, NDH-1 is composed of 13 different subunits. Subunits NuoB, CD, E, F, and G constitute the peripheral sector of the complex.

It localises to the cell inner membrane. The enzyme catalyses a quinone + NADH + 5 H(+)(in) = a quinol + NAD(+) + 4 H(+)(out). Functionally, NDH-1 shuttles electrons from NADH, via FMN and iron-sulfur (Fe-S) centers, to quinones in the respiratory chain. The immediate electron acceptor for the enzyme in this species is believed to be ubiquinone. Couples the redox reaction to proton translocation (for every two electrons transferred, four hydrogen ions are translocated across the cytoplasmic membrane), and thus conserves the redox energy in a proton gradient. In Salmonella choleraesuis (strain SC-B67), this protein is NADH-quinone oxidoreductase subunit C/D.